The sequence spans 585 residues: Tyramine beta-hydroxylase (585 aa).

A signal peptide spans 1 to 21 (MKCANAAALLFFVLCDIGVHG). Positions 31–142 (SNVTVKWQTD…GTTQFYIAAS (112 aa)) constitute a DOMON domain. Residues Asn32 and Asn71 are each glycosylated (N-linked (GlcNAc...) asparagine). Residue Tyr206 is part of the active site. Disulfide bonds link Cys208–Cys258 and Cys247–Cys270. Cu(2+) contacts are provided by His240 and His241. Residues His308, His386, and His388 each contribute to the Cu(2+) site. 3 cysteine pairs are disulfide-bonded: Cys365–Cys477, Cys369–Cys534, and Cys440–Cys462. Residue His386 is part of the active site. Asn449 carries an N-linked (GlcNAc...) asparagine glycan. Met461 lines the Cu(2+) pocket. N-linked (GlcNAc...) asparagine glycosylation is present at Asn483.

This sequence belongs to the copper type II ascorbate-dependent monooxygenase family. The cofactor is Cu(2+).

The protein resides in the cytoplasmic vesicle. It is found in the secretory vesicle. It localises to the synaptic vesicle. It catalyses the reaction tyramine + L-ascorbate + O2 = (R)-octopamine + L-dehydroascorbate + H2O. Functionally, catalyzes the hydroxylation of tyramine into octopamine, a neurotransmitter involved in pharyngeal pumping and egg laying. This is Tyramine beta-hydroxylase (tbh-1) from Caenorhabditis briggsae.